We begin with the raw amino-acid sequence, 616 residues long: MAARINTSLHNALSFLKPFNTPLNTKPFSFRRNSFRFSKKLPYYSQFSSGKRALYCTSSSQESTVDEGETFVLTTPLYYVNAPPHMGSAYTTIAADSIARFQRLLGKKVIFITGTDEHGEKIATSAAANGRNPPEHCDLISQSYRTLWKDLDIAYDKFIRTTDPKHEAIVKEFYARVFANGDIYRADYEGLYCVNCEEYKDEKELLENNCCPVHQMPCVARKEDNYFFALSKYQKPLEDILAQNPRFVQPSYRLNEVQSWIKSGLRDFSISRALVDWGIPVPDDDKQTIYVWFDALLGYISALTEDNKQQNLETAVSFGWPASLHLIGKDILRFHAVYWPAMLMSAGLELPKMVFGHGFLTKDGMKMGKSLGNTLEPFELVQKFGPDAVRYFFLREVEFGNDGDYSEDRFIKIVNAHLANTIGNLLNRTLGLLKKNCESTLVVDSTVAAEGVPLKDTVEKLVEKARTNYENLSLSSACEAVLEIGNAGNTYMDQRAPWFLFKQGGVSAEEAAKDLVIILEVMRVIAVALSPVAPCLSLRIYSQLGYTEDQFNSITWSDTKWGGLKGGQVMEQASPVFARIELNPEKEEDEKKPKVGKKTGKAKVKVVEQTPTVAEA.

The short motif at 78–88 (YYVNAPPHMGS) is the 'HIGH' region element. A 'KMSKS' region motif is present at residues 366–370 (KMGKS). Lysine 369 provides a ligand contact to ATP. The segment covering 582-593 (LNPEKEEDEKKP) has biased composition (basic and acidic residues). A disordered region spans residues 582–602 (LNPEKEEDEKKPKVGKKTGKA).

It belongs to the class-I aminoacyl-tRNA synthetase family.

It localises to the plastid. The protein localises to the chloroplast. Its subcellular location is the mitochondrion. The enzyme catalyses tRNA(Met) + L-methionine + ATP = L-methionyl-tRNA(Met) + AMP + diphosphate. In Arabidopsis thaliana (Mouse-ear cress), this protein is Methionine--tRNA ligase, chloroplastic/mitochondrial.